Here is a 253-residue protein sequence, read N- to C-terminus: Allene oxide cyclase 2, chloroplastic (253 aa).

A chloroplast-targeting transit peptide spans 1 to 77; the sequence is MASSAVSLQS…SQNGNIENPR (77 aa).

Belongs to the allene oxide cyclase family. Highly expressed in fully developed leaves.

The protein resides in the plastid. The protein localises to the chloroplast. It catalyses the reaction (9Z,13S,15Z)-12,13-epoxyoctadeca-9,11,15-trienoate = (9S,13S,15Z)-12-oxophyto-10,15-dienoate. Functionally, involved in the production of 12-oxo-phytodienoic acid (OPDA), a precursor of jasmonic acid. This Arabidopsis thaliana (Mouse-ear cress) protein is Allene oxide cyclase 2, chloroplastic (AOC2).